Here is a 236-residue protein sequence, read N- to C-terminus: Protein EVI2A (236 aa).

Positions 1–30 (MPTDMEHTGHYLHLAFLMTTVFSLSPGTKA) are cleaved as a signal peptide. N-linked (GlcNAc...) asparagine glycans are attached at residues asparagine 31, asparagine 38, asparagine 49, asparagine 73, and asparagine 112. Residues 31-133 (NYTRLWANST…DVCAENNNNM (103 aa)) lie on the Extracellular side of the membrane. A helical transmembrane segment spans residues 134–154 (AMLICLIIIAVLFLICTFLFL). Residues 155 to 236 (STVVLANKVS…TEKLTNKQIG (82 aa)) lie on the Cytoplasmic side of the membrane. Residue serine 211 is modified to Phosphoserine. A disordered region spans residues 217–236 (ATRERKDEEGTEKLTNKQIG). The segment covering 218–236 (TRERKDEEGTEKLTNKQIG) has biased composition (basic and acidic residues).

Belongs to the EVI2A family.

The protein localises to the membrane. May complex with itself or/and other proteins within the membrane, to function as part of a cell-surface receptor. The chain is Protein EVI2A (EVI2A) from Homo sapiens (Human).